An 887-amino-acid chain; its full sequence is CWF19-like protein 2 (887 aa).

The disordered stretch occupies residues 1 to 143; sequence MEAFSVRFES…DKRTEEECDS (143 aa). A coiled-coil region spans residues 11-103; sequence ASSIEERKEQ…KKQKCQKQSE (93 aa). Positions 14–72 are enriched in basic and acidic residues; it reads IEERKEQTRNARAEVLRQAKHNFEKEQRGEERKRLRDEDTWMLPDVHERIEQFSQEHSE. S71 carries the post-translational modification Phosphoserine. Positions 73–98 are enriched in basic residues; the sequence is KKKKKKDKHSKKVKKEKKKKRKKQKC. Residues 99 to 110 are compositionally biased toward low complexity; the sequence is QKQSESTDSSAS. The span at 124 to 143 shows a compositional bias: basic and acidic residues; sequence SDKEKTWKVKDKRTEEECDS. Positions 164 to 254 form a coiled coil; that stretch reads SSSLKAEKET…RNFEDIVAEK (91 aa). Residue K168 forms a Glycyl lysine isopeptide (Lys-Gly) (interchain with G-Cter in SUMO2) linkage. 2 disordered regions span residues 315-370 and 405-447; these read LEME…DEDE and SEES…GRRE. Over residues 342-352 the composition is skewed to basic and acidic residues; it reads CRRESALRKNQ. 2 positions are modified to phosphoserine: S354 and S366. Positions 414–430 are enriched in basic and acidic residues; sequence RSDRRQENRKPSDKKPL. A compositionally biased stretch (polar residues) spans 433 to 442; it reads WSYNANQHST. S478 carries the phosphoserine modification. The stretch at 495–524 forms a coiled coil; it reads IKAEMMGNMELAEQLKAQLKEANKFKETQM. A Glycyl lysine isopeptide (Lys-Gly) (interchain with G-Cter in SUMO2) cross-link involves residue K597. At S622 the chain carries Phosphoserine.

It belongs to the CWF19 family.

This is CWF19-like protein 2 (Cwf19l2) from Mus musculus (Mouse).